We begin with the raw amino-acid sequence, 491 residues long: Tyrosine 3-monooxygenase (491 aa).

S19 carries the post-translational modification Phosphoserine; by CaMK2. A Phosphoserine modification is found at S31. Phosphoserine; by CaMK2 and PKA is present on S40. Fe cation-binding residues include H324, H329, and E369. S465 carries the post-translational modification Phosphoserine.

The protein belongs to the biopterin-dependent aromatic amino acid hydroxylase family. Homotetramer. Interacts (when phosphorylated at Ser-19) with YWHAG; one YWHAG dimer bounds to one TH tetramer and this interaction may influence the phosphorylation and dephosphorylation of other sites. Interacts with NT5DC2; the interaction results in reduced phosphorylation and decreased catalytic activity of TH. The cofactor is Fe(2+). In terms of processing, phosphorylated on Ser-19, Ser-31 and Ser-40 by several protein kinases with different site specificities. Phosphorylation at Ser-31 and Ser-40 leads to an increase of TH activity. Phosphorylation at Ser-40 activates the enzyme and also counteracts the feedback inhibition of TH by catecholamines. Phosphorylation of Ser-19 and Ser-31 triggers the proteasomal degradation of TH through the ubiquitin-proteasome pathway. Phosphorylation at Ser-31 facilitates transport of TH from the soma to the nerve terminals via the microtubule network. Phosphorylation at Ser-19 induces the high-affinity binding to the 14-3-3 protein YWHAG; this interaction may influence the phosphorylation and dephosphorylation of other sites. Ser-19 increases the phosphorylation at Ser-40 in a hierarchical manner, leading to increased activity.

The protein localises to the cytoplasm. It is found in the perinuclear region. Its subcellular location is the nucleus. The protein resides in the cell projection. It localises to the axon. The protein localises to the cytoplasmic vesicle. It is found in the secretory vesicle. Its subcellular location is the synaptic vesicle. The catalysed reaction is (6R)-L-erythro-5,6,7,8-tetrahydrobiopterin + L-tyrosine + O2 = (4aS,6R)-4a-hydroxy-L-erythro-5,6,7,8-tetrahydrobiopterin + L-dopa. The protein operates within catecholamine biosynthesis; dopamine biosynthesis; dopamine from L-tyrosine: step 1/2. Inhibited in feedback fashion by the catecholamine neurotransmitters, especially by dopamine in competition with tetrahydrobiopterin. Phosphorylation of several Ser/Thr residues in the N-terminus regulates the catalytic activity. Ser-31 and Ser-40 are readily phosphorylated to activate the catalytic activity. A Cysteine modification induced by N-ethylmaleimide (NEM), inhibits tyrosine 3-monooxygenase activity through the modification of the Cys-170. Functionally, catalyzes the conversion of L-tyrosine to L-dihydroxyphenylalanine (L-Dopa), the rate-limiting step in the biosynthesis of catecholamines, dopamine, noradrenaline, and adrenaline. Uses tetrahydrobiopterin and molecular oxygen to convert tyrosine to L-Dopa. In addition to tyrosine, is able to catalyze the hydroxylation of phenylalanine and tryptophan with lower specificity. Positively regulates the regression of retinal hyaloid vessels during postnatal development. The sequence is that of Tyrosine 3-monooxygenase (TH) from Bos taurus (Bovine).